The primary structure comprises 450 residues: NADH-ubiquinone oxidoreductase chain 2 (450 aa).

Transmembrane regions (helical) follow at residues Gly-25 to Met-45, Leu-58 to Met-78, Ser-90 to Val-110, Leu-113 to Leu-133, Leu-145 to Val-165, Ala-186 to Leu-206, Thr-219 to Ala-239, Val-248 to Val-268, Thr-272 to Tyr-292, Ala-295 to Leu-315, Leu-344 to Phe-364, Ala-385 to Phe-405, and Asn-414 to Met-436.

Belongs to the complex I subunit 2 family.

It localises to the mitochondrion inner membrane. The enzyme catalyses a ubiquinone + NADH + 5 H(+)(in) = a ubiquinol + NAD(+) + 4 H(+)(out). Functionally, core subunit of the mitochondrial membrane respiratory chain NADH dehydrogenase (Complex I) that is believed to belong to the minimal assembly required for catalysis. Complex I functions in the transfer of electrons from NADH to the respiratory chain. The immediate electron acceptor for the enzyme is believed to be ubiquinone. The sequence is that of NADH-ubiquinone oxidoreductase chain 2 (ND2) from Debaryomyces hansenii (strain ATCC 36239 / CBS 767 / BCRC 21394 / JCM 1990 / NBRC 0083 / IGC 2968) (Yeast).